We begin with the raw amino-acid sequence, 530 residues long: Autoinducer-2 kinase (530 aa).

This sequence belongs to the FGGY kinase family.

The protein localises to the cytoplasm. It catalyses the reaction (S)-4,5-dihydroxypentane-2,3-dione + ATP = (2S)-2-hydroxy-3,4-dioxopentyl phosphate + ADP + H(+). Catalyzes the phosphorylation of autoinducer-2 (AI-2) to phospho-AI-2, which subsequently inactivates the transcriptional regulator LsrR and leads to the transcription of the lsr operon. Phosphorylates the ring-open form of (S)-4,5-dihydroxypentane-2,3-dione (DPD), which is the precursor to all AI-2 signaling molecules, at the C5 position. This is Autoinducer-2 kinase from Escherichia coli O9:H4 (strain HS).